The primary structure comprises 1385 residues: Defecation cycle abnormal dec-7 (1385 aa).

A signal peptide spans 1 to 19 (MWTARHAVALLVVLTYAYS). A glycan (N-linked (GlcNAc...) asparagine) is linked at N156. The disordered stretch occupies residues 234 to 262 (SQTNYGAPNYQQAGAQSAANQQFSNPSQY). Over residues 242 to 261 (NYQQAGAQSAANQQFSNPSQ) the composition is skewed to low complexity. The NIDO domain occupies 285 to 450 (QIYGKRKKRQ…GRWIHRVDEV (166 aa)). 7 N-linked (GlcNAc...) asparagine glycosylation sites follow: N313, N386, N413, N458, N480, N562, and N583. Residues 681–840 (GRNWPIDMCI…DHCEFYYWRR (160 aa)) enclose the AMOP domain. A VWFD domain is found at 852-1088 (AAGYIYGEPH…FWKIDGTNDK (237 aa)). 5 N-linked (GlcNAc...) asparagine glycosylation sites follow: N909, N921, N975, N1009, and N1124. The Sushi domain maps to 1179–1238 (ISCGPLLKKEGVVKTPPAANYLDGDKVVFSCKPKYYIHGDIERVCRNGTWSPGWWAWCRD). 2 disulfides stabilise this stretch: C1181/C1223 and C1209/C1236. N1225 is a glycosylation site (N-linked (GlcNAc...) asparagine). The helical transmembrane segment at 1251–1271 (LLSIFGISLIFVIFFCILWNI) threads the bilayer. The interval 1321 to 1385 (MNQPSRPIPS…GNMRFETSAI (65 aa)) is disordered.

As to expression, highly expressed in the intestinal epithelia.

The protein resides in the membrane. Its subcellular location is the cell junction. Its function is as follows. May negatively regulate activity of innexin gap junction protein inx-16, thereby mediating the rhythmic frequency of the defecation motor program. Required for the clustering of inx-16 to the cell-cell junction of the intestinal epithelia. Probably dispensable for intestinal integrity. May be a cytokine receptor. The protein is Defecation cycle abnormal dec-7 of Caenorhabditis elegans.